The chain runs to 389 residues: Cobalt-precorrin-5B C(1)-methyltransferase (389 aa).

The disordered stretch occupies residues 1–25 (MESRADHAVPADEGHGATEPPRGRD).

The protein belongs to the CbiD family.

The catalysed reaction is Co-precorrin-5B + S-adenosyl-L-methionine = Co-precorrin-6A + S-adenosyl-L-homocysteine. It participates in cofactor biosynthesis; adenosylcobalamin biosynthesis; cob(II)yrinate a,c-diamide from sirohydrochlorin (anaerobic route): step 6/10. Catalyzes the methylation of C-1 in cobalt-precorrin-5B to form cobalt-precorrin-6A. This chain is Cobalt-precorrin-5B C(1)-methyltransferase, found in Nitratidesulfovibrio vulgaris (strain ATCC 29579 / DSM 644 / CCUG 34227 / NCIMB 8303 / VKM B-1760 / Hildenborough) (Desulfovibrio vulgaris).